Here is a 154-residue protein sequence, read N- to C-terminus: Ribonuclease H (154 aa).

The RNase H type-1 domain occupies 9-150 (SHPHIIIYTD…ADALANKGVE (142 aa)). Positions 18, 56, 78, and 142 each coordinate Mg(2+).

It belongs to the RNase H family. In terms of assembly, monomer. The cofactor is Mg(2+).

Its subcellular location is the cytoplasm. The catalysed reaction is Endonucleolytic cleavage to 5'-phosphomonoester.. In terms of biological role, endonuclease that specifically degrades the RNA of RNA-DNA hybrids. The protein is Ribonuclease H of Polynucleobacter asymbioticus (strain DSM 18221 / CIP 109841 / QLW-P1DMWA-1) (Polynucleobacter necessarius subsp. asymbioticus).